We begin with the raw amino-acid sequence, 243 residues long: MRADGRLFDQLRNIKITPNVSEYAEGSAIVEFGRTKVLCTATYESKAPSWLLGTGAGWITAEYGMLPRSTHTRIRRDKSMTGGRTQEISRLIGRSLRAAVDLKQLGEKQIIIDCDVLNADGGTRTASVTGGFVALALALKKLHAVSEIKTLPLINYVSAISVGLHEGQILLDLNYDEDSAIGTDMNFVMTDKGQFVEVQGTAEHVPFTRDQLFKMMDVAEKGCRELFIHQASVMGEIYKIAGA.

Phosphate contacts are provided by residues arginine 84 and glycine 122–arginine 124.

This sequence belongs to the RNase PH family. As to quaternary structure, homohexameric ring arranged as a trimer of dimers.

It catalyses the reaction tRNA(n+1) + phosphate = tRNA(n) + a ribonucleoside 5'-diphosphate. Functionally, phosphorolytic 3'-5' exoribonuclease that plays an important role in tRNA 3'-end maturation. Removes nucleotide residues following the 3'-CCA terminus of tRNAs; can also add nucleotides to the ends of RNA molecules by using nucleoside diphosphates as substrates, but this may not be physiologically important. Probably plays a role in initiation of 16S rRNA degradation (leading to ribosome degradation) during starvation. This chain is Ribonuclease PH, found in Bdellovibrio bacteriovorus (strain ATCC 15356 / DSM 50701 / NCIMB 9529 / HD100).